Reading from the N-terminus, the 452-residue chain is 23S rRNA (uracil(1939)-C(5))-methyltransferase RlmD (452 aa).

The tract at residues 1–23 (MSRKKSNGGLRFQPAGGNRATQI) is disordered. The TRAM domain occupies 22 to 80 (QIPVGKKQRLLIERVAGDGRGIAFIEGRTWFVSGALGGEEVEARVLGARGKVVEARLER). [4Fe-4S] cluster contacts are provided by Cys-93, Cys-99, Cys-102, and Cys-181. Residues Gln-285, Phe-314, Asn-319, Glu-335, Asp-362, and Asp-383 each coordinate S-adenosyl-L-methionine. Cys-409 acts as the Nucleophile in catalysis.

This sequence belongs to the class I-like SAM-binding methyltransferase superfamily. RNA M5U methyltransferase family. RlmD subfamily.

The enzyme catalyses uridine(1939) in 23S rRNA + S-adenosyl-L-methionine = 5-methyluridine(1939) in 23S rRNA + S-adenosyl-L-homocysteine + H(+). Its function is as follows. Catalyzes the formation of 5-methyl-uridine at position 1939 (m5U1939) in 23S rRNA. The sequence is that of 23S rRNA (uracil(1939)-C(5))-methyltransferase RlmD from Pseudomonas entomophila (strain L48).